A 255-amino-acid polypeptide reads, in one-letter code: Adenosylcobinamide-GDP ribazoletransferase (255 aa).

7 helical membrane passes run 33 to 53, 57 to 77, 107 to 127, 136 to 156, 174 to 194, 196 to 216, and 234 to 254; these read IFLP…IELF, FPGF…SGAL, VGSM…GSYA, FTVL…IYSF, AGLI…AAFF, FSLI…FVVA, and IMEL…NIGV.

It belongs to the CobS family. Mg(2+) serves as cofactor.

It is found in the cell membrane. It carries out the reaction alpha-ribazole + adenosylcob(III)inamide-GDP = adenosylcob(III)alamin + GMP + H(+). The catalysed reaction is alpha-ribazole 5'-phosphate + adenosylcob(III)inamide-GDP = adenosylcob(III)alamin 5'-phosphate + GMP + H(+). It functions in the pathway cofactor biosynthesis; adenosylcobalamin biosynthesis; adenosylcobalamin from cob(II)yrinate a,c-diamide: step 7/7. Its function is as follows. Joins adenosylcobinamide-GDP and alpha-ribazole to generate adenosylcobalamin (Ado-cobalamin). Also synthesizes adenosylcobalamin 5'-phosphate from adenosylcobinamide-GDP and alpha-ribazole 5'-phosphate. This is Adenosylcobinamide-GDP ribazoletransferase from Carboxydothermus hydrogenoformans (strain ATCC BAA-161 / DSM 6008 / Z-2901).